We begin with the raw amino-acid sequence, 365 residues long: tRNA/tmRNA (uracil-C(5))-methyltransferase (365 aa).

Positions 189, 217, 222, 238, and 298 each coordinate S-adenosyl-L-methionine. Cys-323 acts as the Nucleophile in catalysis. The active-site Proton acceptor is the Glu-357.

The protein belongs to the class I-like SAM-binding methyltransferase superfamily. RNA M5U methyltransferase family. TrmA subfamily.

The enzyme catalyses uridine(54) in tRNA + S-adenosyl-L-methionine = 5-methyluridine(54) in tRNA + S-adenosyl-L-homocysteine + H(+). It catalyses the reaction uridine(341) in tmRNA + S-adenosyl-L-methionine = 5-methyluridine(341) in tmRNA + S-adenosyl-L-homocysteine + H(+). Dual-specificity methyltransferase that catalyzes the formation of 5-methyluridine at position 54 (m5U54) in all tRNAs, and that of position 341 (m5U341) in tmRNA (transfer-mRNA). This is tRNA/tmRNA (uracil-C(5))-methyltransferase from Psychromonas ingrahamii (strain DSM 17664 / CCUG 51855 / 37).